A 451-amino-acid polypeptide reads, in one-letter code: MKTAMTAESTLYDAQTIRERVRAAGVVGAGGAGFPAHVKLQAQVDTFLVNAAECEPMLKVDQQLMAVQAERLIRGVQYAMTATGARAGIIALKEKYQRAINALTPLLPAGIRLHILPDVYPAGDEVLTIWMATGRRVPPAALPVSVGVVVNNVQTVLNITRAVEQQYPVTRRTLTVNGAVARPITLTVPIGMSLREVLALAGGATVDDPGFINGGPMMGGLITSLDTPVSKTTGGLLVLPKSHALIQRRMQDERTVLSVAKTVCEQCRLCTDLCPRHLIGHELSPHLLVRAVNYQQAATPQLLLTALTCSECNVCESVACPVGISPMRINRMLKRELRALNHRYEGPLNPEDEMAKYRLIPVKRLITKLGLSDWYHDAPLTETDYPTDKTTLLLRQHIGASAIPCVLQGEHVVRGQCVADVPSGALGAPVHASIDGIVSEITEQSITVIRG.

4Fe-4S ferredoxin-type domains follow at residues 255–284 (TVLS…HELS) and 300–330 (PQLL…MRIN). Residues Cys-264, Cys-267, Cys-270, Cys-274, Cys-309, Cys-312, Cys-315, and Cys-320 each coordinate [4Fe-4S] cluster.

Belongs to the PduS cobalamin reductase family. In terms of assembly, monomer, forms a complex with PduO. Interacts with PduT, probably via the N-terminus of PduS. It depends on [4Fe-4S] cluster as a cofactor. Requires FMN as cofactor.

It localises to the bacterial microcompartment. It participates in polyol metabolism; 1,2-propanediol degradation. Its function is as follows. A bifunctional cobalamin reductase that converts cob(III)alamin to cob(II)alamin and then to cob(I)alamin in the bacterial microcompartment (BMC) dedicated to 1,2-propanediol (1,2-PD) degradation. PduS and PduO allow regeneration of the adenosylcobalamin cofactor within the BMC. Cobalamin reduction probably occurs spontaneously in the presence of free reduced flavin nucleotides, this protein may be involved in electron transfer for this reduction. In terms of biological role, expression of a cosmid containing the full 21-gene pdu operon in E.coli allows E.coli to grow on 1,2-propanediol (1,2-PD) with the appearance of BMCs in its cytoplasm. The 1,2-PD-specific bacterial microcompartment (BMC) concentrates low levels of 1,2-PD catabolic enzymes, concentrates volatile reaction intermediates thus enhancing pathway flux and keeps the level of toxic, mutagenic propionaldehyde low. This chain is Cobalamin reductase PduS, found in Citrobacter freundii.